The sequence spans 642 residues: Threonine--tRNA ligase (642 aa).

The 61-residue stretch at 1 to 61 folds into the TGS domain; it reads MPIITLPDGS…EEDASLEIIT (61 aa). Residues 244 to 535 are catalytic; sequence DHRKIGKQLD…LIEEYAGFFP (292 aa). 3 residues coordinate Zn(2+): cysteine 335, histidine 386, and histidine 512.

Belongs to the class-II aminoacyl-tRNA synthetase family. In terms of assembly, homodimer. The cofactor is Zn(2+).

The protein resides in the cytoplasm. The catalysed reaction is tRNA(Thr) + L-threonine + ATP = L-threonyl-tRNA(Thr) + AMP + diphosphate + H(+). Its function is as follows. Catalyzes the attachment of threonine to tRNA(Thr) in a two-step reaction: L-threonine is first activated by ATP to form Thr-AMP and then transferred to the acceptor end of tRNA(Thr). Also edits incorrectly charged L-seryl-tRNA(Thr). The polypeptide is Threonine--tRNA ligase (Vibrio vulnificus (strain CMCP6)).